Reading from the N-terminus, the 261-residue chain is tRNA pseudouridine synthase A (261 aa).

The Nucleophile role is filled by Asp-51. Tyr-109 contributes to the substrate binding site.

The protein belongs to the tRNA pseudouridine synthase TruA family. Homodimer.

It catalyses the reaction uridine(38/39/40) in tRNA = pseudouridine(38/39/40) in tRNA. In terms of biological role, formation of pseudouridine at positions 38, 39 and 40 in the anticodon stem and loop of transfer RNAs. The polypeptide is tRNA pseudouridine synthase A (Photobacterium profundum (strain SS9)).